We begin with the raw amino-acid sequence, 488 residues long: N-succinylglutamate 5-semialdehyde dehydrogenase (488 aa).

Residue 221-226 coordinates NAD(+); the sequence is GSSRTG. Active-site residues include E244 and C278.

The protein belongs to the aldehyde dehydrogenase family. AstD subfamily.

It carries out the reaction N-succinyl-L-glutamate 5-semialdehyde + NAD(+) + H2O = N-succinyl-L-glutamate + NADH + 2 H(+). It participates in amino-acid degradation; L-arginine degradation via AST pathway; L-glutamate and succinate from L-arginine: step 4/5. In terms of biological role, catalyzes the NAD-dependent reduction of succinylglutamate semialdehyde into succinylglutamate. This Pseudomonas syringae pv. tomato (strain ATCC BAA-871 / DC3000) protein is N-succinylglutamate 5-semialdehyde dehydrogenase.